We begin with the raw amino-acid sequence, 396 residues long: Ribosomal RNA small subunit methyltransferase H (396 aa).

S-adenosyl-L-methionine contacts are provided by residues 101–103 (GGH), Asp120, Tyr147, Asp171, and Gln178.

Belongs to the methyltransferase superfamily. RsmH family.

It localises to the cytoplasm. It carries out the reaction cytidine(1402) in 16S rRNA + S-adenosyl-L-methionine = N(4)-methylcytidine(1402) in 16S rRNA + S-adenosyl-L-homocysteine + H(+). Functionally, specifically methylates the N4 position of cytidine in position 1402 (C1402) of 16S rRNA. This Mycobacterium bovis (strain ATCC BAA-935 / AF2122/97) protein is Ribosomal RNA small subunit methyltransferase H.